Here is a 382-residue protein sequence, read N- to C-terminus: uncharacterized protein (382 aa).

12 helical membrane-spanning segments follow: residues 8-28 (VMLL…LNTL), 45-65 (MVSS…GYLI), 75-95 (YLAS…VGFW), 102-122 (FIAG…LMCS), 131-151 (LLAA…LLVS), 157-177 (LLHV…PLLF), 204-224 (LGVN…GLMP), 231-251 (GMAN…GILG), 270-290 (VQVF…AMAP), 291-311 (ALFI…AWAC), 325-345 (ALLL…AMLM), and 349-369 (SDNL…LMLL).

The protein belongs to the major facilitator superfamily. YcaD (TC 2.A.1.26) family.

It localises to the cell inner membrane. This is an uncharacterized protein from Salmonella dublin (strain CT_02021853).